The chain runs to 520 residues: Fumarate hydratase, mitochondrial (520 aa).

The N-terminal 39 residues, 1–39 (MASVAHISTAKAIFRAGGLPCRRLITPTLTGLPLKTHRM), are a transit peptide targeting the mitochondrion. Residues 153-155 (SGT), 184-187 (HPND), 194-196 (SSN), and threonine 242 contribute to the substrate site. Catalysis depends on histidine 243, which acts as the Proton donor/acceptor. Serine 373 is a catalytic residue. Residues serine 374 and 379–381 (KVN) contribute to the substrate site.

It belongs to the class-II fumarase/aspartase family. Fumarase subfamily. As to quaternary structure, homotetramer.

The protein localises to the mitochondrion matrix. It localises to the cytoplasm. It is found in the nucleus. The catalysed reaction is (S)-malate = fumarate + H2O. The protein operates within carbohydrate metabolism; tricarboxylic acid cycle; (S)-malate from fumarate: step 1/1. Catalyzes the reversible stereospecific interconversion of fumarate to L-malate. In mitochondrion, catalyzes the hydration of fumarate to L-malate in the tricarboxylic acid (TCA) cycle to facilitate a transition step in the production of energy in the form of NADH. In cytoplasm and nucleus, involved in DNA repair in response to DNA damage: following DNA double-strand breaks (DSBs), translocates from the cytosol to the nucleus and promotes DNA repair by catalyzing the dehydration of L-malate to fumarate. The chain is Fumarate hydratase, mitochondrial (fum1) from Schizosaccharomyces pombe (strain 972 / ATCC 24843) (Fission yeast).